Consider the following 414-residue polypeptide: HERV-H LTR-associating protein 2 (414 aa).

An N-terminal signal peptide occupies residues 1–22; that stretch reads MKAQTALSFFLILITSLSGSQG. Residues 61-131 form the Ig-like V-type 1 domain; that stretch reads IHWKYQDSYK…YVGTAIQVIT (71 aa). Asn90 and Asn103 each carry an N-linked (GlcNAc...) asparagine glycan. One can recognise an Ig-like C1-type domain in the interval 138–222; the sequence is VGVFLTPVMK…ENSLLKQTWT (85 aa). Disulfide bonds link Cys159-Cys210 and Cys243-Cys317. The region spanning 235–328 is the Ig-like V-type 2 domain; that stretch reads QSEHVSLSCQ…ISSDEYTLLT (94 aa). N-linked (GlcNAc...) asparagine glycosylation is present at Asn318. The helical transmembrane segment at 345–365 threads the bilayer; it reads KGLWILVPSAILAAFLLIWSV. A disordered region spans residues 383 to 414; it reads GAQQERCCVPPGERCPSAPDNGEENVPLSGKV.

In terms of assembly, interacts with TMIGD2. Expressed at high levels in colon, kidney, testis, lung and pancreas, and at lower levels in small intestine, liver and skeletal muscle. In immune cells, highly expressed in B-cells, dendritic cells and macrophages. Not detected in T-cells.

It is found in the membrane. Functionally, through interaction with TMIGD2, costimulates T-cells in the context of TCR-mediated activation. Enhances T-cell proliferation and cytokine production via an AKT-dependent signaling cascade. The protein is HERV-H LTR-associating protein 2 (HHLA2) of Homo sapiens (Human).